We begin with the raw amino-acid sequence, 569 residues long: TBCC domain-containing protein 1 (569 aa).

The C-CAP/cofactor C-like domain maps to 304–435 (PRSHRIVVMS…LEDHMARTGL (132 aa)).

Belongs to the TBCC family.

Its subcellular location is the cytoplasm. It localises to the cytoskeleton. The protein localises to the microtubule organizing center. The protein resides in the centrosome. It is found in the spindle pole. Its function is as follows. Plays a role in the regulation of centrosome and Golgi apparatus positioning, with consequences on cell shape and cell migration. This chain is TBCC domain-containing protein 1 (Tbccd1), found in Rattus norvegicus (Rat).